Reading from the N-terminus, the 574-residue chain is Proline--tRNA ligase (574 aa).

Belongs to the class-II aminoacyl-tRNA synthetase family. ProS type 1 subfamily. As to quaternary structure, homodimer.

The protein localises to the cytoplasm. It carries out the reaction tRNA(Pro) + L-proline + ATP = L-prolyl-tRNA(Pro) + AMP + diphosphate. Catalyzes the attachment of proline to tRNA(Pro) in a two-step reaction: proline is first activated by ATP to form Pro-AMP and then transferred to the acceptor end of tRNA(Pro). As ProRS can inadvertently accommodate and process non-cognate amino acids such as alanine and cysteine, to avoid such errors it has two additional distinct editing activities against alanine. One activity is designated as 'pretransfer' editing and involves the tRNA(Pro)-independent hydrolysis of activated Ala-AMP. The other activity is designated 'posttransfer' editing and involves deacylation of mischarged Ala-tRNA(Pro). The misacylated Cys-tRNA(Pro) is not edited by ProRS. The sequence is that of Proline--tRNA ligase from Buchnera aphidicola subsp. Baizongia pistaciae (strain Bp).